The following is a 309-amino-acid chain: MDEKLFTKELDQWIEQLNECKQLSESQVKSLCEKAKEILTKESNVQEVRCPVTVCGDVHGQFHDLMELFRIGGKSPDTNYLFMGDYVDRGYYSVETVTLLVALKVRYRERITILRGNHESRQITQVYGFYDECLRKYGNANVWKYFTDLFDYLPLTALVDGQIFCLHGGLSPSIDTLDHIRALDRLQEVPHEGPMCDLLWSDPDDRGGWGISPRGAGYTFGQDISETFNHANGLTLVSRAHQLVMEGYNWCHDRNVVTIFSAPNYCYRCGNQAAIMELDDTLKYSFLQFDPAPRRGEPHVTRRTPDYFL.

Residues D57, H59, D85, and N117 each contribute to the Mn(2+) site. Positions 57, 59, and 85 each coordinate Zn(2+). Positions 85 and 117 each coordinate Fe(3+). H118 (proton donor) is an active-site residue. H167 and H241 together coordinate Mn(2+). Residues H167 and H241 each contribute to the Fe(3+) site. Y307 is subject to Phosphotyrosine. L309 carries the post-translational modification Leucine methyl ester.

The protein belongs to the PPP phosphatase family. PP-1 subfamily. As to quaternary structure, PP2A consists of a common heterodimeric core enzyme composed of PPP2CA, a 36 kDa catalytic subunit (subunit C), and PPP2R1A, a 65 kDa constant regulatory subunit (PR65 or subunit A), that associates with a variety of regulatory subunits. Proteins that associate with the core dimer include three families of regulatory subunits B (the R2/B/PR55/B55, R3/B''/PR72/PR130/PR59 and R5/B'/B56 families), the 48 kDa variable regulatory subunit, viral proteins, and cell signaling molecules. Interacts with the PP2A A subunit PPP2R1A. Interacts with the regulatory subunit PPP2R2A. Interacts (via C-terminus) with PTPA. Interacts with NXN; the interaction is direct. Interacts with KCTD20. Interacts with BTBD10. Interacts with SGO1 and SGO2. Interacts with RAF1. Interaction with IGBP1 protects unassembled PPP2CA from degradative ubiquitination. Interacts with GSK3B (via C2 domain). Interacts with MFHAS1; retains PPP2CA into the cytoplasm and excludes it from the nucleus. Interacts with PABIR1/FAM122A. Interacts with ADCY8; interaction is phosphatase activity-dependent; antagonizes interaction between ADCY8 and calmodulin. Interacts with CRTC3 (when phosphorylated at 'Ser-391'). Interacts with SPRY2; the interaction is inhibited by TESK1 interaction with SPRY2, possibly by vesicular sequestration of SPRY2. Interacts with TRAF3IP3. Interacts with AMBRA1 (via PxP motifs); enhancing interaction between PPP2CA and MYC or FOXO3. Forms a complex with AMBRA1 and BECN1; AMBRA1 and BECN1 components of the complex regulate MYC stability via different pathways. Part of the core of STRIPAK complexes composed of PP2A catalytic and scaffolding subunits, the striatins (PP2A regulatory subunits), the striatin-associated proteins MOB4, STRIP1 and STRIP2, PDCD10 and members of the STE20 kinases, such as STK24 and STK26. Phosphatase component of the Integrator-PP2A (INTAC) complex, composed of the Integrator core complex and protein phosphatase 2A subunits PPP2CA and PPP2R1A. It depends on Mn(2+) as a cofactor. The cofactor is Fe(3+). Zn(2+) is required as a cofactor. Reversibly methyl esterified on Leu-309 by leucine carboxyl methyltransferase 1 (Lcmt1) and protein phosphatase methylesterase 1 (Ppme1). Carboxyl methylation influences the affinity of the catalytic subunit for the different regulatory subunits, thereby modulating the PP2A holoenzyme's substrate specificity, enzyme activity and cellular localization. In terms of processing, phosphorylation of either threonine (by autophosphorylation-activated protein kinase) or tyrosine results in inactivation of the phosphatase. Auto-dephosphorylation has been suggested as a mechanism for reactivation. Post-translationally, polyubiquitinated, leading to its degradation by the proteasome.

It localises to the cytoplasm. The protein localises to the nucleus. It is found in the chromosome. The protein resides in the centromere. Its subcellular location is the cytoskeleton. It localises to the spindle pole. The enzyme catalyses O-phospho-L-seryl-[protein] + H2O = L-seryl-[protein] + phosphate. It catalyses the reaction O-phospho-L-threonyl-[protein] + H2O = L-threonyl-[protein] + phosphate. Inhibited by the interaction between PPP2R2A and ARPP19; this inhibition is enhanced when ARPP19 is phosphorylated. Inhibited by the interaction between PPP2R2A and PABIR1/FAM122A. Its function is as follows. Catalytic subunit of protein phosphatase 2A (PP2A), a serine/threonine phosphatase involved in the regulation of a wide variety of enzymes, signal transduction pathways, and cellular events. PP2A is the major phosphatase for microtubule-associated proteins (MAPs). PP2A can modulate the activity of phosphorylase B kinase casein kinase 2, mitogen-stimulated S6 kinase, and MAP-2 kinase. Cooperates with SGO2 to protect centromeric cohesin from separase-mediated cleavage in oocytes specifically during meiosis I. Can dephosphorylate various proteins, such as AXIN1, p53/TP53, PIM3, WEE1. Activates RAF1 by dephosphorylating it at 'Ser-259'. Mediates dephosphorylation of WEE1, preventing its ubiquitin-mediated proteolysis, increasing WEE1 protein levels, and promoting the G2/M checkpoint. Mediates dephosphorylation of MYC; promoting its ubiquitin-mediated proteolysis: interaction with AMBRA1 enhances interaction between PPP2CA and MYC. Mediates dephosphorylation of FOXO3; promoting its stabilization: interaction with AMBRA1 enhances interaction between PPP2CA and FOXO3. Catalyzes dephosphorylation of the pyrin domain of NLRP3, promoting assembly of the NLRP3 inflammasome. Together with RACK1 adapter, mediates dephosphorylation of AKT1 at 'Ser-473', preventing AKT1 activation and AKT-mTOR signaling pathway. Dephosphorylation of AKT1 is essential for regulatory T-cells (Treg) homeostasis and stability. Catalyzes dephosphorylation of PIM3, promotinh PIM3 ubiquitination and proteasomal degradation. Part of the striatin-interacting phosphatase and kinase (STRIPAK) complexes. STRIPAK complexes have critical roles in protein (de)phosphorylation and are regulators of multiple signaling pathways including Hippo, MAPK, nuclear receptor and cytoskeleton remodeling. Different types of STRIPAK complexes are involved in a variety of biological processes such as cell growth, differentiation, apoptosis, metabolism and immune regulation. Key mediator of a quality checkpoint during transcription elongation as part of the Integrator-PP2A (INTAC) complex. The INTAC complex drives premature transcription termination of transcripts that are unfavorably configured for transcriptional elongation: within the INTAC complex, PPP2CA catalyzes dephosphorylation of the C-terminal domain (CTD) of Pol II subunit POLR2A/RPB1 and SUPT5H/SPT5, thereby preventing transcriptional elongation. This is Serine/threonine-protein phosphatase 2A catalytic subunit alpha isoform (Ppp2ca) from Rattus norvegicus (Rat).